The chain runs to 604 residues: Siderophore iron transporter mirB (604 aa).

The segment at Met1–Ser61 is disordered. 14 helical membrane passes run Ala73–Leu95, Phe115–Ile137, Ala149–Ala168, Ala178–Ile200, Gly207–Gly224, Trp237–Leu259, Tyr289–Pro311, Tyr326–Leu343, Thr363–Phe385, Ala400–Ile422, Tyr427–Phe449, Gln454–Leu476, Tyr489–Ile511, and Ala566–Val588.

The protein belongs to the major facilitator superfamily.

The protein resides in the membrane. Involved in the transport of siderophore triacestylfusarinine C and so has a role in iron homeostasis. This is Siderophore iron transporter mirB (mirB) from Emericella nidulans (strain FGSC A4 / ATCC 38163 / CBS 112.46 / NRRL 194 / M139) (Aspergillus nidulans).